The primary structure comprises 328 residues: uncharacterized protein (328 aa).

The residue at position 170 (serine 170) is a Phosphoserine.

The protein localises to the cytoplasm. It is found in the nucleus. This is an uncharacterized protein from Schizosaccharomyces pombe (strain 972 / ATCC 24843) (Fission yeast).